A 216-amino-acid polypeptide reads, in one-letter code: Ceramide-1-phosphate transfer protein (216 aa).

5 residues coordinate an N-acylsphingoid base 1-phosphate: Asp56, Lys60, Arg108, Arg112, and His152.

Belongs to the GLTP family.

It localises to the cytoplasm. It is found in the cytosol. The protein resides in the golgi apparatus. Its subcellular location is the trans-Golgi network membrane. The protein localises to the cell membrane. It localises to the endosome membrane. It is found in the nucleus outer membrane. The catalysed reaction is N-(hexadecanoyl)-sphing-4-enine-1-phosphate(in) = N-(hexadecanoyl)-sphing-4-enine-1-phosphate(out). The enzyme catalyses N-(9Z-octadecenoyl)-sphing-4-enine-1-phosphate(in) = N-(9Z-octadecenoyl)-sphing-4-enine-1-phosphate(out). Functionally, mediates the intracellular transfer of ceramide-1-phosphate (C1P) between organelle membranes and the cell membrane. Required for normal structure of the Golgi stacks. Can bind phosphoceramides with a variety of aliphatic chains, but has a preference for lipids with saturated C16:0 or monounsaturated C18:1 aliphatic chains, and is inefficient with phosphoceramides containing lignoceryl (C24:0). Plays a role in the regulation of the cellular levels of ceramide-1-phosphate, and thereby contributes to the regulation of phospholipase PLA2G4A activity and the release of arachidonic acid. Has no activity with galactosylceramide, lactosylceramide, sphingomyelin, phosphatidylcholine, phosphatidic acid and ceramide. C1P transfer is stimulated by phosphatidylserine in C1P source vesicles. Regulates autophagy, inflammasome mediated IL1B and IL18 processing, and pyroptosis, but not apoptosis. The chain is Ceramide-1-phosphate transfer protein (Cptp) from Rattus norvegicus (Rat).